The sequence spans 1306 residues: Angiotensin-converting enzyme (1306 aa).

A signal peptide spans 1–29 (MGAASGRRGPGLLLPLPLLLLLPPQPALA). Residues 30 to 1256 (LDPGLQPGNF…GLDLDAQQAR (1227 aa)) are Extracellular-facing. 9 N-linked (GlcNAc...) asparagine glycosylation sites follow: Asn38, Asn54, Asn74, Glu103, Asn111, Ile121, Tyr140, Asn146, and Asn160. Peptidase M2 domains follow at residues 40–624 (SADE…LGWP) and 643–1222 (VTDE…LGWP). A disulfide bridge connects residues Cys157 and Cys165. Position 231 (Tyr231) interacts with chloride. Asn318 and Asn368 each carry an N-linked (GlcNAc...) asparagine glycan. Cys359 and Cys377 are disulfide-bonded. His390 is a Zn(2+) binding site. Glu391 serves as the catalytic Proton acceptor 1. The Zn(2+) site is built by His394, Pro414, Glu418, and Arg442. N-linked (GlcNAc...) asparagine glycans are attached at residues Asn445 and Asn509. The active-site Proton donor 1 is His520. Position 529 (Arg529) interacts with chloride. Cys545 and Cys557 form a disulfide bridge. 2 N-linked (GlcNAc...) asparagine glycosylation sites follow: Asn617 and Asn677. Asn695 and Asn714 each carry an N-linked (GlcNAc...) (complex) asparagine glycan. An intrachain disulfide couples Cys757 to Cys763. N-linked (GlcNAc...) asparagine; partial glycosylation is present at Asn760. Chloride-binding residues include Arg791 and Tyr829. The N-linked (GlcNAc...) asparagine; partial glycan is linked to Asn942. The cysteines at positions 957 and 975 are disulfide-linked. Residue His988 coordinates Zn(2+). The active-site Proton acceptor 2 is Glu989. Zn(2+) is bound by residues His992 and Glu1016. Positions 1090 and 1094 each coordinate chloride. The active-site Proton donor 2 is His1118. Residue Arg1127 coordinates chloride. Cys1143 and Cys1155 are disulfide-bonded. Asn1191 is a glycosylation site (N-linked (GlcNAc...) asparagine; partial). Residues 1215–1256 (HGEKLGWPQYNWTPNSARSEGPLPDSGRVSFLGLDLDAQQAR) are juxtamembrane stalk. A helical transmembrane segment spans residues 1257-1277 (VGQWLLLFLGIALLVATLGLS). Over 1278–1306 (QRLFSIRHRSLHRHSHGPQFGSEVELRHS) the chain is Cytoplasmic. Residue Ser1299 is modified to Phosphoserine.

It belongs to the peptidase M2 family. Monomer and homodimer; homodimerizes following binding to an inhibitor. Interacts with calmodulin (CALM1, CALM2 or CALM3); interaction takes place in the cytoplasmic region and regulates phosphorylation and proteolytic cleavage. The cofactor is Zn(2+). Chloride is required as a cofactor. Post-translationally, produced following proteolytic cleavage by secretase enzymes that cleave the transmembrane form in the juxtamembrane stalk region upstream of the transmembrane region. Cleavage can take place at different sites of the juxtamembrane stalk region. Phosphorylated by CK2 on Ser-1299; which allows membrane retention. Phosphorylated on tyrosine residues on its extracellular part, promoting cleavage by secretase enzymes and formation of the soluble form (Angiotensin-converting enzyme, soluble form). In terms of tissue distribution, ubiquitously expressed, with highest levels in lung, kidney, heart, gastrointestinal system and prostate. As to expression, specifically expressed in spermatocytes and adult testis.

It is found in the cell membrane. Its subcellular location is the cytoplasm. It localises to the secreted. It catalyses the reaction Release of a C-terminal dipeptide, oligopeptide-|-Xaa-Yaa, when Xaa is not Pro, and Yaa is neither Asp nor Glu. Thus, conversion of angiotensin I to angiotensin II, with increase in vasoconstrictor activity, but no action on angiotensin II.. The enzyme catalyses angiotensin I + H2O = L-histidyl-L-leucine + angiotensin II. The catalysed reaction is bradykinin + H2O = L-Phe-L-Arg + bradykinin(1-7). It carries out the reaction substance P + H2O = substance P(1-9) + L-Leu-L-Met-NH2. It catalyses the reaction substance P + H2O = substance P(1-8) + Gly-L-Leu-L-Met-NH2. The enzyme catalyses substance P + H2O = L-Phe-L-Phe-Gly-L-Leu-L-Met-NH2 + substance P(1-6). The catalysed reaction is neurotensin + H2O = neurotensin(1-11) + L-isoleucyl-L-leucine. It carries out the reaction goralatide + H2O = N-acetyl-L-seryl-L-aspartate + L-lysyl-L-proline. It catalyses the reaction Met-enkephalin + H2O = L-phenylalanyl-L-methionine + L-tyrosylglycylglycine. The enzyme catalyses Leu-enkephalin + H2O = L-tyrosylglycylglycine + L-phenylalanyl-L-leucine. The catalysed reaction is Met-enkephalin-Arg-Phe + H2O = L-arginyl-L-phenylalanine + Met-enkephalin. Its activity is regulated as follows. The dipeptidyl carboxypeptidase activity is strongly activated by chloride. The dipeptidyl carboxypeptidase activity is specifically inhibited by lisinopril, captopril and enalaprilat. Strongly inhibited by lisinopril and captopril. Its function is as follows. Dipeptidyl carboxypeptidase that removes dipeptides from the C-terminus of a variety of circulating hormones, such as angiotensin I, bradykinin or enkephalins, thereby playing a key role in the regulation of blood pressure, electrolyte homeostasis or synaptic plasticity. Composed of two similar catalytic domains, each possessing a functional active site, with different selectivity for substrates. Plays a major role in the angiotensin-renin system that regulates blood pressure and sodium retention by the kidney by converting angiotensin I to angiotensin II, resulting in an increase of the vasoconstrictor activity of angiotensin. Also able to inactivate bradykinin, a potent vasodilator, and therefore enhance the blood pressure response. Acts as a regulator of synaptic transmission by mediating cleavage of neuropeptide hormones, such as substance P, neurotensin or enkephalins. Catalyzes degradation of different enkephalin neuropeptides (Met-enkephalin, Leu-enkephalin, Met-enkephalin-Arg-Phe and possibly Met-enkephalin-Arg-Gly-Leu). Acts as a regulator of synaptic plasticity in the nucleus accumbens of the brain by mediating cleavage of Met-enkephalin-Arg-Phe, a strong ligand of Mu-type opioid receptor OPRM1, into Met-enkephalin. Met-enkephalin-Arg-Phe cleavage by ACE decreases activation of OPRM1, leading to long-term synaptic potentiation of glutamate release. Also acts as a regulator of hematopoietic stem cell differentiation by mediating degradation of hemoregulatory peptide N-acetyl-SDKP (AcSDKP). Acts as a regulator of cannabinoid signaling pathway by mediating degradation of hemopressin, an antagonist peptide of the cannabinoid receptor CNR1. Involved in amyloid-beta metabolism by catalyzing degradation of Amyloid-beta protein 40 and Amyloid-beta protein 42 peptides, thereby preventing plaque formation. Catalyzes cleavage of cholecystokinin (maturation of Cholecystokinin-8 and Cholecystokinin-5) and Gonadoliberin-1 (both maturation and degradation) hormones. Degradation of hemoregulatory peptide N-acetyl-SDKP (AcSDKP) and amyloid-beta proteins is mediated by the N-terminal catalytic domain, while angiotensin I and cholecystokinin cleavage is mediated by the C-terminal catalytic region. In terms of biological role, soluble form that is released in blood plasma and other body fluids following proteolytic cleavage in the juxtamembrane stalk region. Functionally, isoform produced by alternative promoter usage that is specifically expressed in spermatocytes and adult testis, and which is required for male fertility. In contrast to somatic isoforms, only contains one catalytic domain. Acts as a dipeptidyl carboxypeptidase that removes dipeptides from the C-terminus of substrates. The identity of substrates that are needed for male fertility is unknown. May also have a glycosidase activity which releases GPI-anchored proteins from the membrane by cleaving the mannose linkage in the GPI moiety. The GPIase activity was reported to be essential for the egg-binding ability of the sperm. This activity is however unclear and has been challenged by other groups, suggesting that it may be indirect. This Homo sapiens (Human) protein is Angiotensin-converting enzyme.